We begin with the raw amino-acid sequence, 300 residues long: Arginine/serine-rich protein 1 (300 aa).

The segment at 1 to 142 is disordered; it reads MSSAAVSKYV…RGRSHHRRSY (142 aa). Ser17 carries the phosphoserine modification. Residues 23–36 show a composition bias toward low complexity; it reads SPSTSGSGRSSRLS. Basic residues predominate over residues 37–104; that stretch reads SRSRSRSSSR…RSRSRSRGHR (68 aa). The segment covering 105-115 has biased composition (basic and acidic residues); sequence YYRDSRYEQPR. The span at 116 to 125 shows a compositional bias: low complexity; it reads RYYQSPSPYR. Phosphoserine is present on residues Ser120 and Ser122. Over residues 126–141 the composition is skewed to basic residues; the sequence is SRSRSRSRGRSHHRRS. Omega-N-methylarginine is present on Arg147. Residues 222–300 form a disordered region; the sequence is QGAVSCSGPK…KSPYGLWIPV (79 aa). Over residues 268 to 277 the composition is skewed to basic and acidic residues; it reads PLEKTTKAAV. Ser284 carries the post-translational modification Phosphoserine.

Belongs to the RSRP family. Post-translationally, phosphorylated. Phosphorylation at Ser-120 and Ser-122 mediates the interaction with spliceosome proteins.

The protein resides in the nucleus. Functionally, probably acts as a spliceosomal factor that contributes to spliceosome assembly and regulates the isoform switching of proteins such as PARP6. This chain is Arginine/serine-rich protein 1 (Rsrp1), found in Rattus norvegicus (Rat).